The primary structure comprises 481 residues: Velvet complex subunit B (481 aa).

Disordered regions lie at residues 1–157 (MNSA…YSKI) and 241–339 (GTGA…NGYG). 3 stretches are compositionally biased toward pro residues: residues 36–45 (HPPPPLPPPS), 53–62 (PPLPPPPSAP), and 96–112 (PYAP…QYPR). The Velvet domain maps to 160–464 (GSGWKYSLDV…ANQGIKIPIR (305 aa)). Composition is skewed to low complexity over residues 241–255 (GTGA…TYSS) and 293–325 (QQSY…SAEP).

Belongs to the velvet family. VelB subfamily. In terms of assembly, component of the heterotrimeric velvet complex composed of laeA, veA and velB; VeA acting as a bridging protein between laeA and velB. Forms a heterodimeric complex with vosA; the formation of the velB-vosA complex is light-dependent.

The protein resides in the nucleus. The protein localises to the cytoplasm. Functionally, component of the velvet transcription factor complex that controls sexual/asexual developmental ratio in response to light, promoting sexual development in the darkness while stimulating asexual sporulation under illumination. The velvet complex acts as a global regulator for secondary metabolite gene expression. Component of the velB-VosA heterodimeric complex that plays a dual role in activating genes associated with spore maturation and repressing certain development-associated genes. The velB-VosA complex binds DNA through the DNA-binding domain of vosA that recognizes an 11-nucleotide consensus sequence 5'-CTGGCCGCGGC-3' consisting of two motifs in the promoters of key developmental regulatory genes. Controls the biosynthetic gene cluster for beauvericin, a depsipeptide mycotoxin that functions as a virulence determinant. Also regulates chromatin structure and transcription of siderophore biosynthetic genes and is required for infection of tomato plants. In Fusarium oxysporum f. sp. lycopersici (strain 4287 / CBS 123668 / FGSC 9935 / NRRL 34936) (Fusarium vascular wilt of tomato), this protein is Velvet complex subunit B.